Reading from the N-terminus, the 474-residue chain is Rhodanese-like domain-containing protein 7 (474 aa).

2 disordered regions span residues 20–68 and 179–198; these read SSPP…SSLK and VSPEQEAIHHGHSSSSPLAA. The segment covering 53–68 has biased composition (low complexity); the sequence is QSQPHKLSSSPSSSLK. In terms of domain architecture, Rhodanese spans 245-368; it reads SDPETVVIDV…YLEEVPKTES (124 aa). Catalysis depends on Cys328, which acts as the Cysteine persulfide intermediate. The interval 432–474 is disordered; sequence RARARQTQFEEWGVIGGPDKGRRPATKPDSPRKKINAKLGSSI.

The protein is Rhodanese-like domain-containing protein 7 (STR7) of Arabidopsis thaliana (Mouse-ear cress).